Here is a 382-residue protein sequence, read N- to C-terminus: MDQQKVNLLNYNYSQLRELLIAWDEKPFRAQQLFQWIHQVGICDFAQMTNLGKVLRNKLSQLACIDLPEIVACQKSADGTHKWLLKLECGNCIETVFIPEANRGTLCVSSQVGCALNCSFCSTAKQGFNRNLSTAEIIGQVWLAARELSDNNGTHDKKITNVVMMGMGEPLLNFDNVVSAMNIMMDDLAYGLSKRRVTLSTSGVLPEMERLREVSPVALAVSLHAPTDELRNELVPINKKYPLSQLISLCKRYFKDEPRRKVTFEYVMLKGVNDQPEHASQLIKLLHNVPAKVNLIPFNPFPLTQYQRSSRETIDAFRDKLMKHGINTITRKTRGDDIDAACGQLAGEVKDKTSRSQRWQKLHFMSKTEKSTELTISSEEIA.

The active-site Proton acceptor is glutamate 94. Residues 100 to 336 form the Radical SAM core domain; the sequence is EANRGTLCVS…NTITRKTRGD (237 aa). Cysteine 107 and cysteine 342 are joined by a disulfide. [4Fe-4S] cluster-binding residues include cysteine 114, cysteine 118, and cysteine 121. S-adenosyl-L-methionine contacts are provided by residues 168–169, serine 200, 222–224, and asparagine 299; these read GE and SLH. Cysteine 342 functions as the S-methylcysteine intermediate in the catalytic mechanism.

The protein belongs to the radical SAM superfamily. RlmN family. [4Fe-4S] cluster is required as a cofactor.

It localises to the cytoplasm. It catalyses the reaction adenosine(2503) in 23S rRNA + 2 reduced [2Fe-2S]-[ferredoxin] + 2 S-adenosyl-L-methionine = 2-methyladenosine(2503) in 23S rRNA + 5'-deoxyadenosine + L-methionine + 2 oxidized [2Fe-2S]-[ferredoxin] + S-adenosyl-L-homocysteine. It carries out the reaction adenosine(37) in tRNA + 2 reduced [2Fe-2S]-[ferredoxin] + 2 S-adenosyl-L-methionine = 2-methyladenosine(37) in tRNA + 5'-deoxyadenosine + L-methionine + 2 oxidized [2Fe-2S]-[ferredoxin] + S-adenosyl-L-homocysteine. Functionally, specifically methylates position 2 of adenine 2503 in 23S rRNA and position 2 of adenine 37 in tRNAs. m2A2503 modification seems to play a crucial role in the proofreading step occurring at the peptidyl transferase center and thus would serve to optimize ribosomal fidelity. This is Dual-specificity RNA methyltransferase RlmN from Legionella pneumophila (strain Paris).